The sequence spans 90 residues: Small ribosomal subunit protein uS15c (90 aa).

Belongs to the universal ribosomal protein uS15 family. Part of the 30S ribosomal subunit.

It localises to the plastid. The protein resides in the chloroplast. This Lotus japonicus (Lotus corniculatus var. japonicus) protein is Small ribosomal subunit protein uS15c (rps15).